Consider the following 452-residue polypeptide: NADH-cytochrome b5 reductase-like protein alnC (452 aa).

Residues 4–80 (PASITLAEVA…LKTLLVGSLQ (77 aa)) form the Cytochrome b5 heme-binding domain. FMN is bound at residue 33–38 (AEYRED). Heme is bound by residues His-39 and His-63. Residues 80–83 (QSKT) and 116–125 (NDTSKYGQLP) contribute to the FMN site. The next 2 membrane-spanning stretches (helical) occupy residues 120-140 (KYGQLPSLVLAGGLALLFFTL) and 166-186 (VGFLGGFLTATTLNTAAATFV). The FAD-binding FR-type domain occupies 225–324 (NTQQFLTLVD…RGPFGRYSPS (100 aa)). An FAD-binding site is contributed by 302-305 (YLLN). NADP(+) is bound by residues 389–390 (GQ) and 395–399 (WKGLR).

The protein belongs to the flavoprotein pyridine nucleotide cytochrome reductase family. The cofactor is FAD. FMN is required as a cofactor.

The protein resides in the membrane. The protein operates within polyketide biosynthesis. In terms of biological role, NADH-cytochrome b5 reductase-like protein; part of the gene cluster that mediates the biosynthesis of asperlin, a polyketide showing anti-inflammatory, antitumor and antibiotic activities. The first step of the asperlin biosynthesis is the production of the intermediate 2,4,6-octatrienoic acid by the highly redusing polyketide synthase alnA with cleavage of the PKS product by the esterase alnB. 2,4,6-octatrienoic acid is further converted to asperlin via several steps involving the remaining enzymes from the cluster. The polypeptide is NADH-cytochrome b5 reductase-like protein alnC (Emericella nidulans (strain FGSC A4 / ATCC 38163 / CBS 112.46 / NRRL 194 / M139) (Aspergillus nidulans)).